The following is a 346-amino-acid chain: Outer membrane protein A (346 aa).

The N-terminal stretch at 1 to 21 (MKKTAIAIAVALAGFATVAQA) is a signal peptide. The next 8 beta stranded transmembrane spans lie at 27-37 (TWYTGAKLGWS), 55-66 (QLGAGAFGGYQV), 70-78 (VGFEMGYDW), 96-107 (QGVQLTAKLGYP), 112-120 (LDIYTRLGG), 142-151 (PVFAGGVEYA), 156-163 (IATRLEYQ), and 182-190 (MLSLGVSYR). The interval 197–208 (APVVAPAPAPAP) is hinge-like. 4 repeat units span residues 201–202 (AP), 203–204 (AP), 205–206 (AP), and 207–208 (AP). The interval 201 to 208 (APAPAPAP) is 4 X 2 AA tandem repeats of A-P. The OmpA-like domain maps to 210-338 (VQTKHFTLKS…RVEIEVKGIK (129 aa)). Cys-311 and Cys-323 are disulfide-bonded.

Belongs to the outer membrane OOP (TC 1.B.6) superfamily. OmpA family. Monomer and homodimer.

The protein localises to the cell outer membrane. Functionally, with TolR probably plays a role in maintaining the position of the peptidoglycan cell wall in the periplasm. Acts as a porin with low permeability that allows slow penetration of small solutes; an internal gate slows down solute passage. In terms of biological role, required for conjugation with F-type plasmids; probably serves as the mating receptor on recipient cells. This chain is Outer membrane protein A, found in Escherichia coli O157:H7.